We begin with the raw amino-acid sequence, 367 residues long: DNA polymerase IV (367 aa).

The 185-residue stretch at 14–198 (IIHIDMDAFF…LPIEKFHGVG (185 aa)) folds into the UmuC domain. The Mg(2+) site is built by D18 and D116. The active site involves E117.

It belongs to the DNA polymerase type-Y family. As to quaternary structure, monomer. The cofactor is Mg(2+).

The protein resides in the cytoplasm. The catalysed reaction is DNA(n) + a 2'-deoxyribonucleoside 5'-triphosphate = DNA(n+1) + diphosphate. Functionally, poorly processive, error-prone DNA polymerase involved in untargeted mutagenesis. Copies undamaged DNA at stalled replication forks, which arise in vivo from mismatched or misaligned primer ends. These misaligned primers can be extended by PolIV. Exhibits no 3'-5' exonuclease (proofreading) activity. May be involved in translesional synthesis, in conjunction with the beta clamp from PolIII. In Streptococcus thermophilus (strain CNRZ 1066), this protein is DNA polymerase IV.